The following is a 151-amino-acid chain: MTGRILLLNGPNLNMLGLREPEIYGHATLDDVVELVRARAEHHGLEVDAVQSNHEGDLIDALHRARGTHLGCVLNPGGLTHTSVSLLDAVKASELPTVEVHISNPHARESFRHHSYISPVAAAVIAGAGVDGYGFAVDILANNHLQRTASQ.

Residue Tyr24 is the Proton acceptor of the active site. 3 residues coordinate substrate: Asn75, His81, and Asp88. His101 functions as the Proton donor in the catalytic mechanism. Substrate contacts are provided by residues 102-103 (IS) and Arg112.

It belongs to the type-II 3-dehydroquinase family. As to quaternary structure, homododecamer.

It catalyses the reaction 3-dehydroquinate = 3-dehydroshikimate + H2O. It functions in the pathway metabolic intermediate biosynthesis; chorismate biosynthesis; chorismate from D-erythrose 4-phosphate and phosphoenolpyruvate: step 3/7. Functionally, catalyzes a trans-dehydration via an enolate intermediate. This Corynebacterium efficiens (strain DSM 44549 / YS-314 / AJ 12310 / JCM 11189 / NBRC 100395) protein is 3-dehydroquinate dehydratase 1 (aroQ1).